Reading from the N-terminus, the 204-residue chain is Guanylate kinase (204 aa).

Residues 1–182 (MLYIISAPSG…ALSDLNTIIC (182 aa)) form the Guanylate kinase-like domain. 7–14 (APSGTGKS) lines the ATP pocket.

Belongs to the guanylate kinase family.

It is found in the cytoplasm. It catalyses the reaction GMP + ATP = GDP + ADP. Essential for recycling GMP and indirectly, cGMP. The protein is Guanylate kinase of Baumannia cicadellinicola subsp. Homalodisca coagulata.